The primary structure comprises 466 residues: Soluble pyridine nucleotide transhydrogenase (466 aa).

36–45 (ERYNNVGGGC) serves as a coordination point for FAD.

This sequence belongs to the class-I pyridine nucleotide-disulfide oxidoreductase family. It depends on FAD as a cofactor.

Its subcellular location is the cytoplasm. It catalyses the reaction NAD(+) + NADPH = NADH + NADP(+). In terms of biological role, conversion of NADPH, generated by peripheral catabolic pathways, to NADH, which can enter the respiratory chain for energy generation. The sequence is that of Soluble pyridine nucleotide transhydrogenase from Yersinia pseudotuberculosis serotype O:1b (strain IP 31758).